We begin with the raw amino-acid sequence, 742 residues long: 5-methyltetrahydropteroyltriglutamate--homocysteine methyltransferase (742 aa).

Residues 18-21 and Lys112 contribute to the 5-methyltetrahydropteroyltri-L-glutamate site; that span reads REWK. Residues 420–422 and Glu473 each bind L-homocysteine; that span reads IGS. L-methionine is bound by residues 420 to 422 and Glu473; that span reads IGS. Trp550 provides a ligand contact to 5-methyltetrahydropteroyltri-L-glutamate. Asp588 provides a ligand contact to L-homocysteine. Residue Asp588 participates in L-methionine binding. Glu594 serves as a coordination point for 5-methyltetrahydropteroyltri-L-glutamate. Positions 630, 632, and 654 each coordinate Zn(2+). His683 acts as the Proton donor in catalysis. Residue Cys715 participates in Zn(2+) binding.

It belongs to the vitamin-B12 independent methionine synthase family. Zn(2+) is required as a cofactor.

The catalysed reaction is 5-methyltetrahydropteroyltri-L-glutamate + L-homocysteine = tetrahydropteroyltri-L-glutamate + L-methionine. It participates in amino-acid biosynthesis; L-methionine biosynthesis via de novo pathway; L-methionine from L-homocysteine (MetE route): step 1/1. In terms of biological role, catalyzes the transfer of a methyl group from 5-methyltetrahydrofolate to homocysteine resulting in methionine formation. The polypeptide is 5-methyltetrahydropteroyltriglutamate--homocysteine methyltransferase (Staphylococcus aureus (strain USA300)).